Consider the following 387-residue polypeptide: MTPTELNLKAKALLETHFDDIVLSGEISKITLHGSGHWYFDLKDERSSIACAMFKGANLKVGFKPAVGDFLELCGSVSLYPESGRYQFIATSMKKAGFGDLEAQFLALKERLQKEGLFDPRFKKSLPKFPKKVGIITSKTSAALQDMLKLIHQKEYFLAKIYIFDALTQGNNAPFSLIQALKKADDMDLDVLIIARGGGSREDLFCFNDENLAREIFKAKTPIISAIGHEIDYVISDFVADFRAPTPSAAIDTLFYSKLDIEQSLDLMEEKLMQLWNYKIQNYENLLLNLSKFFKFNSLPKIIDEKIKQSHNIEKQLNHLLANQMRYNELKLDKLQNAYLQHENFFNKSKKFICIRKNGKIANLEDLKSDDIVILSSQTSQKEAKIL.

This sequence belongs to the XseA family. As to quaternary structure, heterooligomer composed of large and small subunits.

Its subcellular location is the cytoplasm. The enzyme catalyses Exonucleolytic cleavage in either 5'- to 3'- or 3'- to 5'-direction to yield nucleoside 5'-phosphates.. Bidirectionally degrades single-stranded DNA into large acid-insoluble oligonucleotides, which are then degraded further into small acid-soluble oligonucleotides. This chain is Exodeoxyribonuclease 7 large subunit, found in Campylobacter jejuni subsp. jejuni serotype O:2 (strain ATCC 700819 / NCTC 11168).